The primary structure comprises 100 residues: Small ribosomal subunit protein uS14c (100 aa).

This sequence belongs to the universal ribosomal protein uS14 family. As to quaternary structure, part of the 30S ribosomal subunit.

It localises to the plastid. It is found in the chloroplast. Binds 16S rRNA, required for the assembly of 30S particles. This Pleurastrum terricola (Filamentous green alga) protein is Small ribosomal subunit protein uS14c.